A 183-amino-acid polypeptide reads, in one-letter code: Ribosome-recycling factor (183 aa).

The protein belongs to the RRF family.

The protein localises to the cytoplasm. In terms of biological role, responsible for the release of ribosomes from messenger RNA at the termination of protein biosynthesis. May increase the efficiency of translation by recycling ribosomes from one round of translation to another. The sequence is that of Ribosome-recycling factor from Clostridium tetani (strain Massachusetts / E88).